The primary structure comprises 439 residues: MNDALEIMKKQATLNIGTIGHVAHGKSTIVKAISGISTIKFKAELERNITIKLGYANAKIYKCDSKCVRPNCYQSFGSSSPDRLSCKKCGGTLKLVRHVSFVDCPGHDVLMATMLNGTAIMDAVLLLIAANEPCPQPQTTEHLFAVEIMDLKKVLVVQNKIDLVSREQALEQHDQIQKFLKTSNVSGPVIPTAAQIGVNIPALLDFIVNYIPEPVRDSTARPKMIVIRSFDVNRPGTRVCEMSGGVIGGSLVTGMLRVGDKIEIRPGLVIRKGNRFVCRPFVSEIVSLKAESIDLSEAYPGGLIGVGTTMDPSFCKADKLVGQVMGKLGFLPSIFHKITVEYSLFPKTTIQGSSKLKEGEHVLLNIGSTTTGSVIGRINETSGEFDLVKPACCEIGERIAISRKINNHWRLIGHGEIKDGTCIEPEYDAEIDDAQRKAD.

The tr-type G domain occupies 11–215 (QATLNIGTIG…FIVNYIPEPV (205 aa)). Residues 20–27 (GHVAHGKS) form a G1 region. Position 23–28 (23–28 (AHGKST)) interacts with GTP. The interval 48-52 (NITIK) is G2. A G3 region spans residues 103 to 106 (DCPG). GTP contacts are provided by residues 159-162 (NKID) and 193-195 (AAQ). The segment at 159–162 (NKID) is G4. The segment at 193 to 195 (AAQ) is G5. An interacts with CDC123 region spans residues 415 to 427 (GEIKDGTCIEPEY).

The protein belongs to the TRAFAC class translation factor GTPase superfamily. Classic translation factor GTPase family. EIF2G subfamily. Eukaryotic translation initiation factor 2 eIF2 is a heterotrimeric complex composed of an alpha, a beta and a gamma subunit. The factors eIF-1, eIF-2, eIF-3, TIF5/eIF-5 and methionyl-tRNAi form a multifactor complex (MFC) that may bind to the 40S ribosome.

The protein resides in the cytoplasm. The protein localises to the cytosol. The enzyme catalyses GTP + H2O = GDP + phosphate + H(+). Functionally, as a subunit of eukaryotic initiation factor 2 eIF2, involved in the early steps of protein synthesis. In the presence of GTP, eIF-2 forms a ternary complex with initiator tRNA Met-tRNAi and then recruits the 40S ribosomal complex and initiation factors eIF-1, eIF-1A and eIF-3 to form the 43S pre-initiation complex (43S PIC), a step that determines the rate of protein translation. The 43S PIC binds to mRNA and scans downstream to the initiation codon, where it forms a 48S initiation complex by codon-anticodon base pairing. This leads to the displacement of eIF-1 to allow GTPase-activating protein (GAP) eIF-5-mediated hydrolysis of eIF2-bound GTP. Hydrolysis of GTP and release of Pi, which makes GTP hydrolysis irreversible, causes the release of the eIF-2-GDP binary complex from the 40S subunit, an event that is essential for the subsequent joining of the 60S ribosomal subunit to form an elongation-competent 80S ribosome. In order for eIF-2 to recycle and catalyze another round of initiation, the GDP bound to eIF-2 must be exchanged with GTP by way of a reaction catalyzed by GDP-GTP exchange factor (GEF) eIF-2B. This is Eukaryotic translation initiation factor 2 subunit gamma from Encephalitozoon cuniculi (strain GB-M1) (Microsporidian parasite).